Consider the following 187-residue polypeptide: Hypoxanthine/guanine phosphoribosyltransferase (187 aa).

It belongs to the purine/pyrimidine phosphoribosyltransferase family. Archaeal HPRT subfamily. In terms of assembly, homodimer.

The protein localises to the cytoplasm. The enzyme catalyses IMP + diphosphate = hypoxanthine + 5-phospho-alpha-D-ribose 1-diphosphate. It catalyses the reaction GMP + diphosphate = guanine + 5-phospho-alpha-D-ribose 1-diphosphate. Its pathway is purine metabolism; IMP biosynthesis via salvage pathway; IMP from hypoxanthine: step 1/1. Functionally, catalyzes a salvage reaction resulting in the formation of IMP that is energically less costly than de novo synthesis. The protein is Hypoxanthine/guanine phosphoribosyltransferase of Methanocorpusculum labreanum (strain ATCC 43576 / DSM 4855 / Z).